The primary structure comprises 368 residues: Ferredoxin--NADP reductase 2 (368 aa).

FAD contacts are provided by Asp57, Gln65, Tyr70, Val110, Phe145, Asp310, and Thr351.

The protein belongs to the ferredoxin--NADP reductase type 2 family. As to quaternary structure, homodimer. FAD serves as cofactor.

The catalysed reaction is 2 reduced [2Fe-2S]-[ferredoxin] + NADP(+) + H(+) = 2 oxidized [2Fe-2S]-[ferredoxin] + NADPH. In Cupriavidus pinatubonensis (strain JMP 134 / LMG 1197) (Cupriavidus necator (strain JMP 134)), this protein is Ferredoxin--NADP reductase 2.